The following is a 402-amino-acid chain: Probable tRNA pseudouridine synthase D (402 aa).

Aspartate 94 functions as the Nucleophile in the catalytic mechanism. Positions 175–364 constitute a TRUD domain; that stretch reads YILNYYGTQR…PGTRRKLITK (190 aa).

The protein belongs to the pseudouridine synthase TruD family.

It carries out the reaction uridine(13) in tRNA = pseudouridine(13) in tRNA. In terms of biological role, could be responsible for synthesis of pseudouridine from uracil-13 in transfer RNAs. This chain is Probable tRNA pseudouridine synthase D, found in Methanococcus aeolicus (strain ATCC BAA-1280 / DSM 17508 / OCM 812 / Nankai-3).